A 360-amino-acid chain; its full sequence is NAD(P)H-quinone oxidoreductase subunit 1, chloroplastic (360 aa).

9 consecutive transmembrane segments (helical) span residues 27–47, 98–118, 129–149, 165–185, 203–223, 248–268, 269–289, 297–317, and 340–360; these read IWIFVPIFSLVLGIITGVLVI, FSIGPSIAVISILLSYSVIPF, IGIFLWIAISSIAPIGLLMSG, AAQSISYEIPLTLCVLSISLL, FWGWNLWRQPIGFIIFLISSL, YSGIKFGLFYVASYLNLLISS, LFVTVLYLGGWNISIPYISIL, IFGTTIGIFITLAKTYLFLFI, and FLLPISLGNLLLTTSFQLFSL.

It belongs to the complex I subunit 1 family. NDH is composed of at least 16 different subunits, 5 of which are encoded in the nucleus.

It localises to the plastid. Its subcellular location is the chloroplast thylakoid membrane. The catalysed reaction is a plastoquinone + NADH + (n+1) H(+)(in) = a plastoquinol + NAD(+) + n H(+)(out). It catalyses the reaction a plastoquinone + NADPH + (n+1) H(+)(in) = a plastoquinol + NADP(+) + n H(+)(out). NDH shuttles electrons from NAD(P)H:plastoquinone, via FMN and iron-sulfur (Fe-S) centers, to quinones in the photosynthetic chain and possibly in a chloroplast respiratory chain. The immediate electron acceptor for the enzyme in this species is believed to be plastoquinone. Couples the redox reaction to proton translocation, and thus conserves the redox energy in a proton gradient. This is NAD(P)H-quinone oxidoreductase subunit 1, chloroplastic from Lepidium virginicum (Virginia pepperweed).